The chain runs to 347 residues: NADH-ubiquinone oxidoreductase chain 2 (347 aa).

Helical transmembrane passes span 3–23 (PLIM…VMTG), 25–45 (HWLM…PMLM), 59–79 (YFFT…INLM), 96–116 (IIMT…FWVP), 127–147 (GLIL…MISP), 148–168 (GINL…GGWG), 178–198 (IMAY…IYNP), 201–221 (TLLN…LFMI), 247–267 (TLLS…WMII), 276–296 (IVLP…YMRL), and 325–345 (LLTP…MMMI).

Belongs to the complex I subunit 2 family. In terms of assembly, core subunit of respiratory chain NADH dehydrogenase (Complex I) which is composed of 45 different subunits. Interacts with TMEM242.

It localises to the mitochondrion inner membrane. It carries out the reaction a ubiquinone + NADH + 5 H(+)(in) = a ubiquinol + NAD(+) + 4 H(+)(out). In terms of biological role, core subunit of the mitochondrial membrane respiratory chain NADH dehydrogenase (Complex I) which catalyzes electron transfer from NADH through the respiratory chain, using ubiquinone as an electron acceptor. Essential for the catalytic activity and assembly of complex I. The protein is NADH-ubiquinone oxidoreductase chain 2 of Ozimops beccarii (Beccari's free-tailed bat).